Reading from the N-terminus, the 333-residue chain is Phenylalanine--tRNA ligase alpha subunit (333 aa).

E248 is a Mg(2+) binding site.

The protein belongs to the class-II aminoacyl-tRNA synthetase family. Phe-tRNA synthetase alpha subunit type 1 subfamily. As to quaternary structure, tetramer of two alpha and two beta subunits. The cofactor is Mg(2+).

The protein resides in the cytoplasm. It carries out the reaction tRNA(Phe) + L-phenylalanine + ATP = L-phenylalanyl-tRNA(Phe) + AMP + diphosphate + H(+). This is Phenylalanine--tRNA ligase alpha subunit from Ureaplasma parvum serovar 3 (strain ATCC 27815 / 27 / NCTC 11736).